Consider the following 503-residue polypeptide: Betaine aldehyde dehydrogenase 2 (503 aa).

A betaine aldehyde-binding site is contributed by 161–170 (WNYPLLMATW). An NAD(+)-binding site is contributed by 238 to 243 (GSYETG). Betaine aldehyde is bound by residues Glu260, 292-295 (QICS), and Cys453. Residues Glu260 and Cys294 contribute to the active site. Residues 260-261 (EL) and Cys294 each bind 4-aminobutanal. Residue Trp459 participates in 4-aminobutanal binding. The Microbody targeting signal signature appears at 501 to 503 (SKL).

This sequence belongs to the aldehyde dehydrogenase family. In terms of assembly, homodimer.

The protein resides in the peroxisome. It is found in the cytoplasm. The enzyme catalyses betaine aldehyde + NAD(+) + H2O = glycine betaine + NADH + 2 H(+). It functions in the pathway amine and polyamine biosynthesis; betaine biosynthesis via choline pathway; betaine from betaine aldehyde: step 1/1. Dehydrogenase that can use N-acetyl-c-aminobutyraldehyde (NAGABald), gamma-guanidinobutyraldehyde (GGBald), betaine aldehyde (Bet-ald), gamma-aminobutyraldehyde (GAB-ald), acetaldehyde, 4-aminobutylaldehyde (AB-ald), 3-aminopropionaldehyde (AP-ald), 4-N-trimethylaminobutyraldehyde (TMAB-ald) and 3-N-trimethylaminopropionaldehyde (TMAP-ald) as substrates. Catalyzes the oxidation of GAB-ald more efficiently than Bet-ald. Mediates the conversion of GAB-ald into gamma-aminobutyric acid (GABA), and prevents the formation of 2-acetyl-1-pyrroline (2AP) which gives fragrant rice its aromatic properties. The polypeptide is Betaine aldehyde dehydrogenase 2 (BADH2) (Oryza sativa subsp. indica (Rice)).